The chain runs to 545 residues: Ribulokinase (545 aa).

Belongs to the ribulokinase family.

The enzyme catalyses D-ribulose + ATP = D-ribulose 5-phosphate + ADP + H(+). It carries out the reaction L-ribulose + ATP = L-ribulose 5-phosphate + ADP + H(+). It functions in the pathway carbohydrate degradation; L-arabinose degradation via L-ribulose; D-xylulose 5-phosphate from L-arabinose (bacterial route): step 2/3. The protein is Ribulokinase of Staphylococcus aureus (strain MSSA476).